The primary structure comprises 432 residues: Glutamyl-tRNA reductase (432 aa).

Substrate contacts are provided by residues Thr-55–Arg-58, Ser-114, Glu-119–Gln-121, and Gln-125. The active-site Nucleophile is Cys-56. Gly-194–Ile-199 provides a ligand contact to NADP(+).

Belongs to the glutamyl-tRNA reductase family. In terms of assembly, homodimer.

The enzyme catalyses (S)-4-amino-5-oxopentanoate + tRNA(Glu) + NADP(+) = L-glutamyl-tRNA(Glu) + NADPH + H(+). The protein operates within porphyrin-containing compound metabolism; protoporphyrin-IX biosynthesis; 5-aminolevulinate from L-glutamyl-tRNA(Glu): step 1/2. In terms of biological role, catalyzes the NADPH-dependent reduction of glutamyl-tRNA(Glu) to glutamate 1-semialdehyde (GSA). This chain is Glutamyl-tRNA reductase, found in Burkholderia multivorans (strain ATCC 17616 / 249).